A 324-amino-acid chain; its full sequence is Chlorophyllase-1 (324 aa).

The short motif at 136–140 is the GXSXG element; that stretch reads GHSRG. Ser138 (nucleophile) is an active-site residue. Catalysis depends on charge relay system residues Asp168 and His243.

Belongs to the AB hydrolase superfamily. Lipase family. In terms of tissue distribution, expressed in seedlings, leaves, flowers and siliques, but not in roots.

The protein resides in the cytoplasm. Its subcellular location is the cytosol. It carries out the reaction a chlorophyll + H2O = a chlorophyllide + phytol + H(+). It catalyses the reaction chlorophyll a + H2O = phytol + chlorophyllide a + H(+). It functions in the pathway porphyrin-containing compound metabolism; chlorophyll degradation. In terms of biological role, catalyzes the hydrolysis of ester bond in chlorophyll to yield chlorophyllide and phytol. Shows a preferential activity toward chlorophyll a. Does not seem to be required for chlorophyll degradation during senescence. May modulate the balance between different plant defense pathways. This chain is Chlorophyllase-1, found in Arabidopsis thaliana (Mouse-ear cress).